The sequence spans 334 residues: Nucleoid-associated protein YPN_2714 (334 aa).

Belongs to the YejK family.

The protein localises to the cytoplasm. It is found in the nucleoid. This Yersinia pestis bv. Antiqua (strain Nepal516) protein is Nucleoid-associated protein YPN_2714.